The chain runs to 186 residues: MEKYLIVGLGNPGSNYAKTRHNAGFMVINEICNKLNLFLDNSKFNGMFAKTIYNNCVVFFCQPTTYMNLSGEFVSKMLKFYDIPIKNLIVIYDDVDTKLGVIKLRKKGSSGGQNGIKNIINLLKTEEIKRIRVGIGKDPHAKLDQYVLSNFKIDELVIIKPAIIKGALAALEAIGEDFDKVMNKFN.

Tyr-16 contacts tRNA. The active-site Proton acceptor is the His-21. The tRNA site is built by Tyr-66, Asn-68, and Asn-114.

It belongs to the PTH family. As to quaternary structure, monomer.

It is found in the cytoplasm. It carries out the reaction an N-acyl-L-alpha-aminoacyl-tRNA + H2O = an N-acyl-L-amino acid + a tRNA + H(+). Functionally, hydrolyzes ribosome-free peptidyl-tRNAs (with 1 or more amino acids incorporated), which drop off the ribosome during protein synthesis, or as a result of ribosome stalling. In terms of biological role, catalyzes the release of premature peptidyl moieties from peptidyl-tRNA molecules trapped in stalled 50S ribosomal subunits, and thus maintains levels of free tRNAs and 50S ribosomes. In Ureaplasma urealyticum serovar 10 (strain ATCC 33699 / Western), this protein is Peptidyl-tRNA hydrolase.